Here is a 344-residue protein sequence, read N- to C-terminus: Fructose-bisphosphate aldolase (344 aa).

Residue serine 53 participates in D-glyceraldehyde 3-phosphate binding. Aspartate 95 (proton donor) is an active-site residue. Zn(2+)-binding residues include histidine 96, aspartate 131, glutamate 161, and histidine 212. Position 213 (glycine 213) interacts with dihydroxyacetone phosphate. Histidine 252 serves as a coordination point for Zn(2+). Residues 253–255 (GGS) and 274–277 (NVDT) contribute to the dihydroxyacetone phosphate site.

It belongs to the class II fructose-bisphosphate aldolase family. Zn(2+) serves as cofactor.

The enzyme catalyses beta-D-fructose 1,6-bisphosphate = D-glyceraldehyde 3-phosphate + dihydroxyacetone phosphate. The protein operates within carbohydrate degradation; glycolysis; D-glyceraldehyde 3-phosphate and glycerone phosphate from D-glucose: step 4/4. In terms of biological role, catalyzes the aldol condensation of dihydroxyacetone phosphate (DHAP or glycerone-phosphate) with glyceraldehyde 3-phosphate (G3P) to form fructose 1,6-bisphosphate (FBP) in gluconeogenesis and the reverse reaction in glycolysis. This Corynebacterium glutamicum (strain ATCC 13032 / DSM 20300 / JCM 1318 / BCRC 11384 / CCUG 27702 / LMG 3730 / NBRC 12168 / NCIMB 10025 / NRRL B-2784 / 534) protein is Fructose-bisphosphate aldolase (fba).